The primary structure comprises 567 residues: Lactase-like protein (567 aa).

The first 21 residues, Met1–Ala21, serve as a signal peptide directing secretion. The Extracellular portion of the chain corresponds to Arg23 to Glu541. N-linked (GlcNAc...) asparagine glycans are attached at residues Asn80, Asn171, and Asn245. The chain crosses the membrane as a helical span at residues Ile542–Leu562. Residues Leu563–Ser567 are Cytoplasmic-facing.

It belongs to the glycosyl hydrolase 1 family. Klotho subfamily. In terms of assembly, may form dimers.

The protein localises to the endoplasmic reticulum membrane. In terms of biological role, plays a role in formation of the lens suture in the eye, which is important for normal optical properties of the lens. The sequence is that of Lactase-like protein (LCTL) from Homo sapiens (Human).